We begin with the raw amino-acid sequence, 399 residues long: Probable protein phosphatase 2C 28 (399 aa).

In terms of domain architecture, PPM-type phosphatase spans Glu48–Leu356. Mn(2+) is bound by residues Asp87, Gly88, Asp288, and Asp347.

It belongs to the PP2C family. Requires Mg(2+) as cofactor. Mn(2+) serves as cofactor.

The catalysed reaction is O-phospho-L-seryl-[protein] + H2O = L-seryl-[protein] + phosphate. The enzyme catalyses O-phospho-L-threonyl-[protein] + H2O = L-threonyl-[protein] + phosphate. In Oryza sativa subsp. japonica (Rice), this protein is Probable protein phosphatase 2C 28.